A 139-amino-acid polypeptide reads, in one-letter code: Actin-depolymerizing factor 1 (139 aa).

The 135-residue stretch at 5-139 (ASGMAVHDDC…DLDVFRSRAN (135 aa)) folds into the ADF-H domain. The residue at position 6 (S6) is a Phosphoserine; by CPK3.

The protein belongs to the actin-binding proteins ADF family. In terms of assembly, interacts with the 14-3-3-like protein GRF6/AFT1. Post-translationally, phosphorylation at Ser-6 by CPK3/CDPK6 inhibits actin-depolimerizing activity. In terms of tissue distribution, expressed in vascular tissues of all organs.

It localises to the cytoplasm. Its subcellular location is the cytoskeleton. In terms of biological role, actin-depolymerizing protein. Stimulates F-actin depolymerization. Involved in plant development, cell organ expansion and flowering by controlling breakdown of thick actin cables. Severs actin filaments or bundles and promotes actin cytoskeleton disassembly. Binds monomeric actin (G-actin) with a marked preference for the ADP-loaded form and inhibits the rate of nucleotide exchange on G-actin. This is Actin-depolymerizing factor 1 (ADF1) from Arabidopsis thaliana (Mouse-ear cress).